Reading from the N-terminus, the 526-residue chain is Exodeoxyribonuclease 7 large subunit (526 aa).

Residues Ala497–Phe526 form a disordered region.

The protein belongs to the XseA family. As to quaternary structure, heterooligomer composed of large and small subunits.

Its subcellular location is the cytoplasm. The enzyme catalyses Exonucleolytic cleavage in either 5'- to 3'- or 3'- to 5'-direction to yield nucleoside 5'-phosphates.. In terms of biological role, bidirectionally degrades single-stranded DNA into large acid-insoluble oligonucleotides, which are then degraded further into small acid-soluble oligonucleotides. The chain is Exodeoxyribonuclease 7 large subunit from Rhizobium etli (strain ATCC 51251 / DSM 11541 / JCM 21823 / NBRC 15573 / CFN 42).